The primary structure comprises 342 residues: Fructose-1,6-bisphosphatase class 1 (342 aa).

4 residues coordinate Mg(2+): glutamate 97, aspartate 119, leucine 121, and aspartate 122. Substrate contacts are provided by residues aspartate 122 to serine 125, asparagine 215, tyrosine 247, and lysine 280. Residue glutamate 286 participates in Mg(2+) binding.

It belongs to the FBPase class 1 family. Homotetramer. The cofactor is Mg(2+).

Its subcellular location is the cytoplasm. The catalysed reaction is beta-D-fructose 1,6-bisphosphate + H2O = beta-D-fructose 6-phosphate + phosphate. The protein operates within carbohydrate biosynthesis; gluconeogenesis. The chain is Fructose-1,6-bisphosphatase class 1 from Leptospira borgpetersenii serovar Hardjo-bovis (strain JB197).